Reading from the N-terminus, the 365-residue chain is Class I histocompatibility antigen, Gogo-A*0101 alpha chain (365 aa).

The N-terminal stretch at 1 to 24 is a signal peptide; that stretch reads MAVMAPRTLVLLLSGALALTQTWA. The tract at residues 25-114 is alpha-1; sequence GSHSMRYFST…LRGYYNQSED (90 aa). Over 25–308 the chain is Extracellular; it reads GSHSMRYFST…EPSSQPTIPI (284 aa). A glycan (N-linked (GlcNAc...) asparagine) is linked at Asn-110. The alpha-2 stretch occupies residues 115–206; it reads GSHTIQRMYG…ENGKETLQRT (92 aa). 2 cysteine pairs are disulfide-bonded: Cys-125/Cys-188 and Cys-227/Cys-283. Positions 207–298 are alpha-3; that stretch reads DAPKTHMTHH…GLPEPLTLRW (92 aa). Residues 209 to 297 enclose the Ig-like C1-type domain; the sequence is PKTHMTHHAV…EGLPEPLTLR (89 aa). The interval 299–308 is connecting peptide; the sequence is EPSSQPTIPI. The helical transmembrane segment at 309 to 332 threads the bilayer; that stretch reads VGIIAGLVLFGAVIAGAVVAAVRW. The Cytoplasmic segment spans residues 333-365; it reads RRKSSDRKGGSYSQAASSDSAQGSDVSLTACKV. The disordered stretch occupies residues 338 to 365; that stretch reads DRKGGSYSQAASSDSAQGSDVSLTACKV. Low complexity predominate over residues 342-359; sequence GSYSQAASSDSAQGSDVS. The residue at position 343 (Ser-343) is a Phosphoserine. Tyr-344 carries the post-translational modification Phosphotyrosine. 6 positions are modified to phosphoserine: Ser-345, Ser-349, Ser-350, Ser-352, Ser-356, and Ser-359.

This sequence belongs to the MHC class I family. Heterodimer of an alpha chain and a beta chain (beta-2-microglobulin).

Its subcellular location is the membrane. Its function is as follows. Involved in the presentation of foreign antigens to the immune system. The chain is Class I histocompatibility antigen, Gogo-A*0101 alpha chain from Gorilla gorilla gorilla (Western lowland gorilla).